The primary structure comprises 242 residues: MNVAGYISLLVILSLLIGYLFGSIMFADVASMILKRNVRELGSKNPGTTNSFRVFPKKVAIAIGFFEIIKSVIPFSIILLIYKYGLQPELTKLDPSVINKTYYLTYLAPLAAIFGHMYPVYFKFNGGKAVATTAGFVFVVSPWWFLIIALTWWTITLISKYVSLASIVCFIIFLFLPYIPWLDYLWWFSLDKITFLTYQSDWYIIVFFAIANTILSTIIIWKHRGNIVRLINKQENKITKKV.

6 consecutive transmembrane segments (helical) span residues isoleucine 7–alanine 27, isoleucine 61–isoleucine 81, tyrosine 102–phenylalanine 122, glycine 135–isoleucine 155, valine 162–leucine 182, and aspartate 201–tryptophan 221.

The protein belongs to the PlsY family. Probably interacts with PlsX.

It is found in the cell membrane. The catalysed reaction is an acyl phosphate + sn-glycerol 3-phosphate = a 1-acyl-sn-glycero-3-phosphate + phosphate. Its pathway is lipid metabolism; phospholipid metabolism. Functionally, catalyzes the transfer of an acyl group from acyl-phosphate (acyl-PO(4)) to glycerol-3-phosphate (G3P) to form lysophosphatidic acid (LPA). This enzyme utilizes acyl-phosphate as fatty acyl donor, but not acyl-CoA or acyl-ACP. The sequence is that of Glycerol-3-phosphate acyltransferase from Mycoplasmoides gallisepticum (strain R(low / passage 15 / clone 2)) (Mycoplasma gallisepticum).